The following is a 58-amino-acid chain: ATP synthase F(0) complex subunit k, mitochondrial (58 aa).

Residues Lys16 and Lys17 each carry the N6-acetyllysine modification. A helical membrane pass occupies residues 23–45 (TLTGRMNCVLATYGGIALLVLYF).

Component of the ATP synthase complex composed at least of ATP5F1A/subunit alpha, ATP5F1B/subunit beta, ATP5MC1/subunit c (homooctomer), MT-ATP6/subunit a, MT-ATP8/subunit 8, ATP5ME/subunit e, ATP5MF/subunit f, ATP5MG/subunit g, ATP5MK/subunit k, ATP5MJ/subunit j, ATP5F1C/subunit gamma, ATP5F1D/subunit delta, ATP5F1E/subunit epsilon, ATP5PF/subunit F6, ATP5PB/subunit b, ATP5PD/subunit d, ATP5PO/subunit OSCP. ATP synthase complex consists of a soluble F(1) head domain (subunits alpha(3) and beta(3)) - the catalytic core - and a membrane F(0) domain - the membrane proton channel (subunits c, a, 8, e, f, g, k and j). These two domains are linked by a central stalk (subunits gamma, delta, and epsilon) rotating inside the F1 region and a stationary peripheral stalk (subunits F6, b, d, and OSCP). The ATP synthase complex/complex V exists as a monomeric and a dimeric supercomplex that helps shape mitochondrial cristae to optimize proton flow.

It localises to the mitochondrion membrane. In terms of biological role, subunit k, of the mitochondrial membrane ATP synthase complex (F(1)F(0) ATP synthase or Complex V) that produces ATP from ADP in the presence of a proton gradient across the membrane which is generated by electron transport complexes of the respiratory chain. ATP synthase complex consist of a soluble F(1) head domain - the catalytic core - and a membrane F(1) domain - the membrane proton channel. These two domains are linked by a central stalk rotating inside the F(1) region and a stationary peripheral stalk. During catalysis, ATP synthesis in the catalytic domain of F(1) is coupled via a rotary mechanism of the central stalk subunits to proton translocation. In vivo, can only synthesize ATP although its ATP hydrolase activity can be activated artificially in vitro. Part of the complex F(0) domain. Required for dimerization of the ATP synthase complex and as such regulates ATP synthesis in the mitochondria. In Mus musculus (Mouse), this protein is ATP synthase F(0) complex subunit k, mitochondrial.